Reading from the N-terminus, the 443-residue chain is Regulator of rDNA transcription protein 5 (443 aa).

Residues 4-87 enclose the RRM 1 domain; that stretch reads SRIYIANVSY…RVLRVRTHNP (84 aa). The disordered stretch occupies residues 112–140; the sequence is EDTAASGERAPTDAQDHPDQPQEGHMSPD. Residues 121-133 show a composition bias toward basic and acidic residues; the sequence is APTDAQDHPDQPQ. Positions 183–268 constitute an RRM 2 domain; that stretch reads DTVYCAFLPK…TKISIKPAYI (86 aa). Residues 408-443 are disordered; that stretch reads GMTKQSVGSNKKKNKKKKSARGKEVRKLSVSNTTTQ. A compositionally biased stretch (basic residues) spans 417–427; it reads NKKKNKKKKSA.

It belongs to the RRT5 family.

May be involved in the modulation of rDNA transcription. The sequence is that of Regulator of rDNA transcription protein 5 (RRT5) from Candida glabrata (strain ATCC 2001 / BCRC 20586 / JCM 3761 / NBRC 0622 / NRRL Y-65 / CBS 138) (Yeast).